We begin with the raw amino-acid sequence, 71 residues long: MRKSFYSWLMTQRNPKSNEPVAILADYAFDETTFPKHSSDFETVSRYLEDEASFSFNLTDFDDIWEDYLNH.

This sequence belongs to the UPF0346 family.

The sequence is that of UPF0346 protein SAK_1533 from Streptococcus agalactiae serotype Ia (strain ATCC 27591 / A909 / CDC SS700).